Reading from the N-terminus, the 287-residue chain is MTLSDRLPLYGRLMRLDKPIGSLLLLWPTLWALWLAADGKPPLHVLVIFTIGTVLMRSAGCVINDYADRDFDGHVERTRNRPLATRAVSTREALALAAGLSALSFVLILPLDPLVIWLSFPALFLAASYPFTKRFFAIPQAYLGIAFGFGIPMGFAAVQGEVPPIAWVMLLANIFWAVAYDTEYAMVDRPDDLKIGIKTSAITFGRFDVAAVMLCYAVALGLLGWVGAQAGRGALYFAGLAVAAGMALYHYTLIRHRERAPCFKAFRHNNWLGAAVFAGLALDYLIG.

8 helical membrane-spanning segments follow: residues 19 to 39, 43 to 63, 94 to 116, 135 to 155, 160 to 180, 207 to 227, 234 to 254, and 269 to 286; these read PIGS…AADG, LHVL…GCVI, LALA…PLVI, FFAI…PMGF, GEVP…AVAY, FDVA…GWVG, ALYF…YTLI, and NNWL…DYLI.

The protein belongs to the UbiA prenyltransferase family. Mg(2+) is required as a cofactor.

Its subcellular location is the cell inner membrane. It carries out the reaction all-trans-octaprenyl diphosphate + 4-hydroxybenzoate = 4-hydroxy-3-(all-trans-octaprenyl)benzoate + diphosphate. It participates in cofactor biosynthesis; ubiquinone biosynthesis. Catalyzes the prenylation of para-hydroxybenzoate (PHB) with an all-trans polyprenyl group. Mediates the second step in the final reaction sequence of ubiquinone-8 (UQ-8) biosynthesis, which is the condensation of the polyisoprenoid side chain with PHB, generating the first membrane-bound Q intermediate 3-octaprenyl-4-hydroxybenzoate. The polypeptide is 4-hydroxybenzoate octaprenyltransferase (Azoarcus sp. (strain BH72)).